A 191-amino-acid chain; its full sequence is Somatotropin (191 aa).

A Zn(2+)-binding site is contributed by His20. The cysteines at positions 53 and 164 are disulfide-linked. Residue Glu173 coordinates Zn(2+). Cys181 and Cys189 are joined by a disulfide.

It belongs to the somatotropin/prolactin family.

The protein localises to the secreted. Functionally, growth hormone plays an important role in growth control and is involved in the regulation of several anabolic processes. Implicated as an osmoregulatory substance important for seawater adaptation. The polypeptide is Somatotropin (GH) (Chelonia mydas (Green sea-turtle)).